The chain runs to 147 residues: Myoglobin (147 aa).

Residues 2-141 form the Globin domain; it reads ADFDMVLKCW…IIADMEADYK (140 aa). Histidine 60 lines the nitrite pocket. Histidine 60 lines the O2 pocket. Histidine 89 serves as a coordination point for heme b.

The protein belongs to the globin family. Monomeric.

It is found in the cytoplasm. The protein resides in the sarcoplasm. It catalyses the reaction Fe(III)-heme b-[protein] + nitric oxide + H2O = Fe(II)-heme b-[protein] + nitrite + 2 H(+). The enzyme catalyses H2O2 + AH2 = A + 2 H2O. In terms of biological role, monomeric heme protein which primary function is to store oxygen and facilitate its diffusion within muscle tissues. Reversibly binds oxygen through a pentacoordinated heme iron and enables its timely and efficient release as needed during periods of heightened demand. Depending on the oxidative conditions of tissues and cells, and in addition to its ability to bind oxygen, it also has a nitrite reductase activity whereby it regulates the production of bioactive nitric oxide. Under stress conditions, like hypoxia and anoxia, it also protects cells against reactive oxygen species thanks to its pseudoperoxidase activity. The sequence is that of Myoglobin (mb) from Notothenia neglecta (Yellowbelly rockcod).